Consider the following 188-residue polypeptide: Diphosphoinositol polyphosphate phosphohydrolase DDP1 (188 aa).

Basic and acidic residues predominate over residues 1 to 21; that stretch reads MGKTADNHGPVRSETAREGRE. The tract at residues 1–23 is disordered; sequence MGKTADNHGPVRSETAREGRENQ. Positions 30-179 constitute a Nudix hydrolase domain; it reads GARLVAGCIC…KRPELLEALN (150 aa). 1D-myo-inositol hexakisphosphate is bound by residues R32, S52, S53, and K63. Positions 32, 52, 53, and 63 each coordinate 5-diphospho-1D-myo-inositol 1,2,3,4,6-pentakisphosphate. Residues R32, S52, S53, and K63 each contribute to the P(1),P(5)-bis(5'-adenosyl) pentaphosphate site. Positions 63, 80, and 84 each coordinate Mg(2+). The short motif at 65–86 is the Nudix box element; sequence GVEKDEPNYETTAQRETWEEAG. D100 contributes to the P(1),P(5)-bis(5'-adenosyl) pentaphosphate binding site. Positions 102, 129, 152, and 171 each coordinate 1D-myo-inositol hexakisphosphate. Residue R102 coordinates 5-diphospho-1D-myo-inositol 1,2,3,4,6-pentakisphosphate. 2 residues coordinate 5-diphospho-1D-myo-inositol 1,2,3,4,6-pentakisphosphate: R152 and R171. R152, R171, and E173 together coordinate P(1),P(5)-bis(5'-adenosyl) pentaphosphate.

Belongs to the Nudix hydrolase family. DIPP subfamily. Mg(2+) is required as a cofactor. The cofactor is Mn(2+). Requires Zn(2+) as cofactor.

The protein resides in the cytoplasm. It localises to the nucleus. It carries out the reaction diphospho-myo-inositol polyphosphate + H2O = myo-inositol polyphosphate + phosphate.. It catalyses the reaction P(1),P(6)-bis(5'-adenosyl) hexaphosphate + H2O = adenosine 5'-pentaphosphate + AMP + 2 H(+). The catalysed reaction is P(1),P(5)-bis(5'-adenosyl) pentaphosphate + H2O = adenosine 5'-tetraphosphate + AMP + 2 H(+). The enzyme catalyses [phosphate](n+1) + n H2O = (n+1) phosphate + n H(+). Functionally, may eliminate potentially toxic dinucleoside polyphosphates during sporulation. Most active against diadenosine 5',5'''-P1,P6-hexaphosphate (Ap6A). Can also hydrolyze diadenosine 5',5'''-P1,P5-pentaphosphate (Ap5A), adenosine 5'-pentaphosphate (p5A), and adenosine 5'-tetraphosphate (p4A) are also substrates, but not diadenosine 5',5'''-P1,P4-tetraphosphate (Ap4A) or other dinucleotides, mononucleotides, nucleotide sugars, or nucleotide alcohols. Also cleaves a beta-phosphate from the diphosphate groups in PP-InsP5 (diphosphoinositol pentakisphosphate) and [PP]2-InsP4 (bisdiphosphoinositol tetrakisphosphate). Also has endopolyphosphatase activity. The protein is Diphosphoinositol polyphosphate phosphohydrolase DDP1 (DDP1) of Saccharomyces cerevisiae (strain ATCC 204508 / S288c) (Baker's yeast).